Here is a 186-residue protein sequence, read N- to C-terminus: Nicotinamide-nucleotide adenylyltransferase (186 aa).

The protein belongs to the archaeal NMN adenylyltransferase family.

The protein resides in the cytoplasm. The catalysed reaction is beta-nicotinamide D-ribonucleotide + ATP + H(+) = diphosphate + NAD(+). It participates in cofactor biosynthesis; NAD(+) biosynthesis; NAD(+) from nicotinamide D-ribonucleotide: step 1/1. The protein is Nicotinamide-nucleotide adenylyltransferase of Pyrococcus horikoshii (strain ATCC 700860 / DSM 12428 / JCM 9974 / NBRC 100139 / OT-3).